The primary structure comprises 498 residues: Delta(14)-sterol reductase erg24A (498 aa).

4 helical membrane passes run 30-50, 91-111, 136-156, and 163-183; these read LGAF…TFLC, VTVW…FLPG, ILIL…FVVW, and YVQI…FVYA. N-linked (GlcNAc...) asparagine glycosylation occurs at asparagine 257. 3 consecutive transmembrane segments (helical) span residues 275–295, 302–322, and 339–359; these read IVLS…MEPA, VIMD…VPFI, and LREI…FRGA. NADP(+) is bound by residues lysine 363, arginine 367, tryptophan 395, and 402–403; that span reads NY. Asparagine 429 carries N-linked (GlcNAc...) asparagine glycosylation. Residues 444 to 464 form a helical membrane-spanning segment; that stretch reads VRGWGMIFTYFFLVYFGALLI. Residues aspartate 470, 474 to 478, and tyrosine 485 contribute to the NADP(+) site; that span reads CKSKY.

Belongs to the ERG4/ERG24 family.

It localises to the endoplasmic reticulum membrane. It participates in steroid metabolism; ergosterol biosynthesis. Its function is as follows. Delta(14)-sterol reductase; part of the third module of ergosterol biosynthesis pathway that includes the late steps of the pathway. Catalyzes the reduction of the C14=C15 double bond within 4,4,24-trimethyl ergosta-8,14,24(28)-trienolto produce 4,4-dimethylfecosterol. The third module or late pathway involves the ergosterol synthesis itself through consecutive reactions that mainly occur in the endoplasmic reticulum (ER) membrane. Firstly, the squalene synthase erg9 catalyzes the condensation of 2 farnesyl pyrophosphate moieties to form squalene, which is the precursor of all steroids. Squalene synthase is crucial for balancing the incorporation of farnesyl diphosphate (FPP) into sterol and nonsterol isoprene synthesis. Secondly, squalene is converted into lanosterol by the consecutive action of the squalene epoxidase erg1 and the lanosterol synthase erg7. Then, the delta(24)-sterol C-methyltransferase erg6 methylates lanosterol at C-24 to produce eburicol. Eburicol is the substrate of the sterol 14-alpha demethylase encoded by cyp51A and cyp51B, to yield 4,4,24-trimethyl ergosta-8,14,24(28)-trienol. The C-14 reductase erg24 then reduces the C14=C15 double bond which leads to 4,4-dimethylfecosterol. A sequence of further demethylations at C-4, involving the C-4 demethylation complex containing the C-4 methylsterol oxidases erg25A or erg25B, the sterol-4-alpha-carboxylate 3-dehydrogenase erg26 and the 3-keto-steroid reductase erg27, leads to the production of fecosterol via 4-methylfecosterol. The C-8 sterol isomerase erg2 then catalyzes the reaction which results in unsaturation at C-7 in the B ring of sterols and thus converts fecosterol to episterol. The sterol-C5-desaturase erg3B then catalyzes the introduction of a C-5 double bond in the B ring to produce 5-dehydroepisterol. The 2 other sterol-C5-desaturases, erg3A and erg3C, seem to be less important in ergosterol biosynthesis. The C-22 sterol desaturase erg5 further converts 5-dehydroepisterol into ergosta-5,7,22,24(28)-tetraen-3beta-ol by forming the C-22(23) double bond in the sterol side chain. Finally, ergosta-5,7,22,24(28)-tetraen-3beta-ol is substrate of the C-24(28) sterol reductases erg4A and erg4B to produce ergosterol. Possible alternative sterol biosynthetic pathways might exist from fecosterol to ergosterol, depending on the activities of the erg3 isoforms. This is Delta(14)-sterol reductase erg24A from Aspergillus fumigatus (strain ATCC MYA-4609 / CBS 101355 / FGSC A1100 / Af293) (Neosartorya fumigata).